The primary structure comprises 268 residues: Tryptophan synthase alpha chain (268 aa).

Active-site proton acceptor residues include Glu49 and Asp60.

The protein belongs to the TrpA family. Tetramer of two alpha and two beta chains.

It carries out the reaction (1S,2R)-1-C-(indol-3-yl)glycerol 3-phosphate + L-serine = D-glyceraldehyde 3-phosphate + L-tryptophan + H2O. It participates in amino-acid biosynthesis; L-tryptophan biosynthesis; L-tryptophan from chorismate: step 5/5. Functionally, the alpha subunit is responsible for the aldol cleavage of indoleglycerol phosphate to indole and glyceraldehyde 3-phosphate. The polypeptide is Tryptophan synthase alpha chain (Escherichia coli O81 (strain ED1a)).